Reading from the N-terminus, the 660-residue chain is DNA topoisomerase I, plasmid (660 aa).

The region spanning 1 to 110 (MKLMIIESPG…LRVTFNEITA (110 aa)) is the Toprim domain. Glu-7 and Asp-79 together coordinate Mg(2+). The Topo IA-type catalytic domain maps to 124–550 (DVKRVAAQEA…KVHDQLNMEL (427 aa)). The interaction with DNA stretch occupies residues 158-163 (SAGRVQ). Residue Tyr-287 is the O-(5'-phospho-DNA)-tyrosine intermediate of the active site. C4-type zinc fingers lie at residues 563 to 589 (CQEC…YPDC) and 613 to 643 (CVKC…KEGC).

It belongs to the type IA topoisomerase family. As to quaternary structure, monomer. Mg(2+) serves as cofactor.

The enzyme catalyses ATP-independent breakage of single-stranded DNA, followed by passage and rejoining.. Releases the supercoiling and torsional tension of DNA, which is introduced during the DNA replication and transcription, by transiently cleaving and rejoining one strand of the DNA duplex. Introduces a single-strand break via transesterification at a target site in duplex DNA. The scissile phosphodiester is attacked by the catalytic tyrosine of the enzyme, resulting in the formation of a DNA-(5'-phosphotyrosyl)-enzyme intermediate and the expulsion of a 3'-OH DNA strand. The free DNA strand then undergoes passage around the unbroken strand, thus removing DNA supercoils. Finally, in the religation step, the DNA 3'-OH attacks the covalent intermediate to expel the active-site tyrosine and restore the DNA phosphodiester backbone. The protein is DNA topoisomerase I, plasmid of Xylella fastidiosa (strain 9a5c).